Consider the following 462-residue polypeptide: Ketoisovalerate reductase (462 aa).

The segment at 34–55 is disordered; it reads PTAVKPDRADRGDFDPGKYPVD. A compositionally biased stretch (basic and acidic residues) spans 38-49; it reads KPDRADRGDFDP. Position 72 to 77 (72 to 77) interacts with NADP(+); that stretch reads GPGNVG. A Calmoduling-binding motif is present at residues 167 to 184; sequence ADRLRRYLGRCSSVVFAQ. Catalysis depends on K290, which acts as the Proton donor. Positions 294, 298, and 403 each coordinate substrate. E415 serves as a coordination point for NADP(+).

The protein belongs to the ketopantoate reductase family. In terms of assembly, homodimer. Binds to calmodulin in a calcium-independent manner.

It catalyses the reaction (R)-2-hydroxy-3-methylbutanoate + NADP(+) = 3-methyl-2-oxobutanoate + NADPH + H(+). With respect to regulation, environmental stimuli such as light and salt stress suppress activity through stimulation of calmodulin (CaM) that binds BEA2 and probably impairs its dimerization. Its function is as follows. Ketoisovalerate reductase; part of the gene cluster that mediates the biosynthesis of beauvericin (BEA), a non-ribosomal cyclic hexadepsipeptide that shows antibiotic, antifungal, insecticidal, and cancer cell antiproliferative and antihaptotactic activity. Ketoisovalerate reductase BEA2 catalyzes the NADPH-specific reduction of ketoisovaleric acid to hydroxyisovalerate, a precursor for beauvericin biosynthesis. The nonribosomal cyclodepsipeptide synthetase BEA1 then catalyzes the formation of beauvericin via condensation and cyclization of 3 dipeptidol monomers, each composed of one unit of hydroxyisovalerate and one unit of N-methyl-phenylalanine. The polypeptide is Ketoisovalerate reductase (Beauveria bassiana (White muscardine disease fungus)).